The primary structure comprises 264 residues: Enhancer of mRNA-decapping protein 1 (264 aa).

2 disordered regions span residues 1–180 and 193–264; these read MLAQ…FSTI and YNNP…LRDY. The segment covering 63–74 has biased composition (basic residues); sequence GKKSTSKPKSKS. The span at 83-92 shows a compositional bias: polar residues; sequence NFKLTASPSL. The span at 108 to 118 shows a compositional bias: pro residues; sequence PSPPPPPPPST. Composition is skewed to low complexity over residues 119-134, 161-172, and 208-226; these read QPSTSTSTSPTPRTST, NGKKPNFFNNNN, and NNNNNNSSNNSNNSNNSNS. Positions 248-264 are enriched in polar residues; sequence FKSNNGSPRQSSGLRDY.

Belongs to the EDC family.

Its subcellular location is the cytoplasm. Its function is as follows. mRNA-binding protein which stimulates mRNA decapping. This chain is Enhancer of mRNA-decapping protein 1 (EDC1), found in Candida albicans (strain SC5314 / ATCC MYA-2876) (Yeast).